A 422-amino-acid polypeptide reads, in one-letter code: Gamma-glutamyl phosphate reductase (422 aa).

This sequence belongs to the gamma-glutamyl phosphate reductase family.

It is found in the cytoplasm. It carries out the reaction L-glutamate 5-semialdehyde + phosphate + NADP(+) = L-glutamyl 5-phosphate + NADPH + H(+). It functions in the pathway amino-acid biosynthesis; L-proline biosynthesis; L-glutamate 5-semialdehyde from L-glutamate: step 2/2. Its function is as follows. Catalyzes the NADPH-dependent reduction of L-glutamate 5-phosphate into L-glutamate 5-semialdehyde and phosphate. The product spontaneously undergoes cyclization to form 1-pyrroline-5-carboxylate. The polypeptide is Gamma-glutamyl phosphate reductase (Nitrosomonas eutropha (strain DSM 101675 / C91 / Nm57)).